The following is a 259-amino-acid chain: Tegument protein UL51 homolog (259 aa).

Cysteine 9 carries the S-palmitoyl cysteine; by host lipid modification.

Belongs to the herpesviridae UL51 family. Oligomerizes. Interacts with ORF53; this interaction mediates ORF53 incorporation to virions. In terms of processing, phosphorylated. Post-translationally, palmitoylation is necessary for Golgi localization.

The protein resides in the virion tegument. It is found in the host cytoplasm. Its subcellular location is the host Golgi apparatus. Plays several roles during the time course of infection, including egress of virus particles from the perinuclear space and secondary envelopment of cytoplasmic capsids that bud into specific trans-Golgi network (TGN)-derived membranes. This chain is Tegument protein UL51 homolog, found in Varicella-zoster virus (strain Dumas) (HHV-3).